The chain runs to 240 residues: Protein Thf1 (240 aa).

Positions 186–222 form a coiled coil; it reads KDLDLYRSNLEKVDQLLKVLEDAAEAERKKKEKQAAS. Residues 212 to 240 form a disordered region; the sequence is ERKKKEKQAASTTPAIEEAPVTTAESSES.

Belongs to the THF1 family.

Its function is as follows. May be involved in photosynthetic membrane biogenesis. The chain is Protein Thf1 from Synechocystis sp. (strain ATCC 27184 / PCC 6803 / Kazusa).